Reading from the N-terminus, the 529-residue chain is Bifunctional purine biosynthesis protein PurH (529 aa).

The MGS-like domain occupies 1–148 (MQQRRPVRRA…KNHKDVAIVV (148 aa)).

This sequence belongs to the PurH family.

It carries out the reaction (6R)-10-formyltetrahydrofolate + 5-amino-1-(5-phospho-beta-D-ribosyl)imidazole-4-carboxamide = 5-formamido-1-(5-phospho-D-ribosyl)imidazole-4-carboxamide + (6S)-5,6,7,8-tetrahydrofolate. The catalysed reaction is IMP + H2O = 5-formamido-1-(5-phospho-D-ribosyl)imidazole-4-carboxamide. The protein operates within purine metabolism; IMP biosynthesis via de novo pathway; 5-formamido-1-(5-phospho-D-ribosyl)imidazole-4-carboxamide from 5-amino-1-(5-phospho-D-ribosyl)imidazole-4-carboxamide (10-formyl THF route): step 1/1. It participates in purine metabolism; IMP biosynthesis via de novo pathway; IMP from 5-formamido-1-(5-phospho-D-ribosyl)imidazole-4-carboxamide: step 1/1. This is Bifunctional purine biosynthesis protein PurH from Salmonella paratyphi B (strain ATCC BAA-1250 / SPB7).